Reading from the N-terminus, the 511-residue chain is Maturase K (511 aa).

It belongs to the intron maturase 2 family. MatK subfamily.

Its subcellular location is the plastid. It localises to the chloroplast. Usually encoded in the trnK tRNA gene intron. Probably assists in splicing its own and other chloroplast group II introns. This is Maturase K from Triticum aestivum (Wheat).